The sequence spans 229 residues: Ras-related protein RabZ (229 aa).

Residues 1-39 (MGCFHSREPTATGKTKKEEPTSAVKTNKEEKSSNYVSEP) are disordered. Glycine 2 carries the N-myristoyl glycine lipid modification. Cysteine 3 carries S-palmitoyl cysteine lipidation. The segment covering 15–32 (TKKEEPTSAVKTNKEEKS) has biased composition (basic and acidic residues). 57 to 64 (GDQATGKS) serves as a coordination point for GTP. An Effector region motif is present at residues 79 to 88 (HKPSPIIIDC). GTP contacts are provided by residues 106–110 (DTAGQ) and 164–167 (NKCD).

This sequence belongs to the small GTPase superfamily. Rab family. Post-translationally, although this sequence lacks the C-terminal cysteine motifs subject to isoprenylation in other Rab proteins, it does have N-terminal myristoylation and S-palmitoylation sequence motifs.

This chain is Ras-related protein RabZ (rabZ), found in Dictyostelium discoideum (Social amoeba).